Reading from the N-terminus, the 657-residue chain is MEVETTEPEPDCVVQPPSPSDDFSCQMRISEKISPLKTCFKKKQEQKRLGTGTLRSLRPILNTLLESGSLDGVFRARDQNRDESSLHEHIVKKPLEINPSCPPAENSMPVLIPDGTNVEGQLPEAHPSTDAPEQGVPIQDHSFPPETISGTVADSTTGHFQTDLLHPVSGDVPTSPDCVDKVMDYVPGAFQDNSFTIQYILDTSDKLSTELFQDKSEEASLELVFELVNQLQYHTHQENGIEICMDFLQGTCIYGRDCLKHHTVLPYHWQIKRTTTQKWQSVSNDSQEHLERFYCNPENDRMRMKYGGQDFWADLNAMTVFETTEFDQLRRLSTPPCSNSNSIYHTFWKFFCRDHFGWREYPESVVRLIEEANSRGLKEVRFMMWNNHYILHNSFFRREIKRRPLFRSCFILIPYLQTLGGVPTQASLPLEATSSQIICPDGVTSANFYPETWVYMHPSQDFIQVPVSAEDKSYRIIYNLFHKTVPEFKYRILQILRVQNQFLWEKYKRKKEYMNRKMSGRDRIINERHLFHGTSQDVVDGICKHNFDPRVCGKHATMFGQGSYFAKKASYSHNFSKKSSKGVHFMFLAKVLTGRYTMGSHGMRRPPPVNPGSVTSDLYDSCVDNFFEPQIFVIFNDDQSYPYFVIQYEEVSNTVSI.

Positions 1-10 (MEVETTEPEP) are enriched in acidic residues. Residues 1–22 (MEVETTEPEPDCVVQPPSPSDD) form a disordered region. Position 39 is an ADP-ribosylcysteine (Cys39). The Nuclear localization signal motif lies at 41–48 (KKKQEQKR). Positions 121–154 (QLPEAHPSTDAPEQGVPIQDHSFPPETISGTVAD) are disordered. The C3H1-type zinc-finger motif lies at 238–265 (ENGIEICMDFLQGTCIYGRDCLKHHTVL). The WWE domain occupies 333–411 (STPPCSNSNS…RRPLFRSCFI (79 aa)). In terms of domain architecture, PARP catalytic spans 449 to 657 (YPETWVYMHP…YEEVSNTVSI (209 aa)).

This sequence belongs to the ARTD/PARP family. In terms of assembly, interacts with AHR. In terms of processing, auto-mono-ADP-ribosylated. Ubiquitously expressed.

The protein localises to the nucleus. It catalyses the reaction L-aspartyl-[protein] + NAD(+) = 4-O-(ADP-D-ribosyl)-L-aspartyl-[protein] + nicotinamide. It carries out the reaction L-glutamyl-[protein] + NAD(+) = 5-O-(ADP-D-ribosyl)-L-glutamyl-[protein] + nicotinamide. The enzyme catalyses L-cysteinyl-[protein] + NAD(+) = S-(ADP-D-ribosyl)-L-cysteinyl-[protein] + nicotinamide + H(+). Its function is as follows. ADP-ribosyltransferase that mediates mono-ADP-ribosylation of glutamate, aspartate and cysteine residues on target proteins. Acts as a negative regulator of AHR by mediating mono-ADP-ribosylation of AHR, leading to inhibit transcription activator activity of AHR. The protein is Protein mono-ADP-ribosyltransferase TIPARP of Mus musculus (Mouse).